A 420-amino-acid polypeptide reads, in one-letter code: MNILDDLKARGLVYQTTDEEALYKRLESPMTLYCGFDPTADSLHIGHLLPVLMLRRFQLAGHCPIALVGGGTGLIGDPSGKTSERTLNPTEVVQEWANRIKEQLSCFLDFEGVGNPAIMANNYEWLGTINVIEFLRDIGKNFSLGSMLAKESVESRMSRGISFTEFSYQILQSYDFLKLNELYGCEMQIGGSDQWGNITSGTDLIRRMSVGEDRQVHGLTVPLVTKSDGTKFGKTEGGAVWLDQDKTSPYKFYQFWINTDDRDVVKYLNFFTFLSIEEIQGLAQEVESQPEKRNAQRMLAKEVTELVHGVEARERAEKISQALFTGGIANLTAKEVEEGFSDVPSADVEDQEMLLVDALIKVGAVSSRRQARESMESGAVYVNGIRQTDTTLTVAQLDKIESRFIVIRRGKKNYYLVKLV.

Tyr-33 serves as a coordination point for L-tyrosine. Residues 38-47 carry the 'HIGH' region motif; sequence PTADSLHIGH. Residues Tyr-168 and Gln-172 each coordinate L-tyrosine. A 'KMSKS' region motif is present at residues 231 to 235; the sequence is KFGKT. An ATP-binding site is contributed by Lys-234. One can recognise an S4 RNA-binding domain in the interval 353–419; it reads MLLVDALIKV…GKKNYYLVKL (67 aa).

This sequence belongs to the class-I aminoacyl-tRNA synthetase family. TyrS type 1 subfamily. As to quaternary structure, homodimer.

It is found in the cytoplasm. It carries out the reaction tRNA(Tyr) + L-tyrosine + ATP = L-tyrosyl-tRNA(Tyr) + AMP + diphosphate + H(+). In terms of biological role, catalyzes the attachment of tyrosine to tRNA(Tyr) in a two-step reaction: tyrosine is first activated by ATP to form Tyr-AMP and then transferred to the acceptor end of tRNA(Tyr). This is Tyrosine--tRNA ligase from Desulfitobacterium hafniense (strain Y51).